We begin with the raw amino-acid sequence, 205 residues long: Thymidylate kinase (205 aa).

10–17 contacts ATP; it reads GIDGAGKS.

The protein belongs to the thymidylate kinase family.

It catalyses the reaction dTMP + ATP = dTDP + ADP. Phosphorylation of dTMP to form dTDP in both de novo and salvage pathways of dTTP synthesis. The polypeptide is Thymidylate kinase (Ralstonia nicotianae (strain ATCC BAA-1114 / GMI1000) (Ralstonia solanacearum)).